A 487-amino-acid chain; its full sequence is UDP-glucose flavonoid 3-O-glucosyltransferase 7 (487 aa).

His-23 functions as the Proton acceptor in the catalytic mechanism. An an anthocyanidin-binding site is contributed by His-23. The active-site Charge relay is the Asp-121. Positions 345, 347, 362, 365, 366, 367, and 370 each coordinate UDP-alpha-D-glucose. Position 385 (Gly-385) interacts with an anthocyanidin. UDP-alpha-D-glucose-binding residues include Glu-386 and Gln-387.

It belongs to the UDP-glycosyltransferase family. As to expression, strongly expressed in achenes and receptacles.

The enzyme catalyses a flavonol + UDP-alpha-D-glucose = a flavonol 3-O-beta-D-glucoside + UDP + H(+). Its function is as follows. Broad spectrum multifunctional glucosyltransferase. Catalyzes the formation of flavonol 3-O- and 4'-O-glucosides during fruit ripening. Accepted substrates include several flavonoids, hydroxycoumarins and beta-naphthols. Uses UDP-Glc as a sugar donor, but not UDP-Gal or UDP-GlcUA. May also be involved in detoxification of xenobiotics. This Fragaria ananassa (Strawberry) protein is UDP-glucose flavonoid 3-O-glucosyltransferase 7.